The chain runs to 811 residues: Glycerol-3-phosphate acyltransferase (811 aa).

Positions 309 to 314 (HRSHMD) match the HXXXXD motif motif.

Belongs to the GPAT/DAPAT family.

The protein localises to the cell inner membrane. The enzyme catalyses sn-glycerol 3-phosphate + an acyl-CoA = a 1-acyl-sn-glycero-3-phosphate + CoA. Its pathway is phospholipid metabolism; CDP-diacylglycerol biosynthesis; CDP-diacylglycerol from sn-glycerol 3-phosphate: step 1/3. This Vibrio cholerae serotype O1 (strain ATCC 39315 / El Tor Inaba N16961) protein is Glycerol-3-phosphate acyltransferase (plsB).